The sequence spans 215 residues: Redox-sensing transcriptional repressor Rex (215 aa).

Positions 18-57 form a DNA-binding region, H-T-H motif; that stretch reads LYYRFLKNLHASGKQRVSSAELSDAVKVDSATIRRDFSYF. An NAD(+)-binding site is contributed by 92 to 97; sequence GVGNLG.

This sequence belongs to the transcriptional regulatory Rex family. As to quaternary structure, homodimer.

It is found in the cytoplasm. Modulates transcription in response to changes in cellular NADH/NAD(+) redox state. The chain is Redox-sensing transcriptional repressor Rex from Bacillus subtilis (strain 168).